The chain runs to 239 residues: Ribosomal RNA small subunit methyltransferase G (239 aa).

S-adenosyl-L-methionine contacts are provided by residues Gly-77, Phe-82, 128-129 (AE), and Arg-146. Positions 214-239 (IDKKRQTPKKYPRKPGTPNKTPLLEK) are disordered.

It belongs to the methyltransferase superfamily. RNA methyltransferase RsmG family.

It localises to the cytoplasm. Its function is as follows. Specifically methylates the N7 position of guanine in position 535 of 16S rRNA. The chain is Ribosomal RNA small subunit methyltransferase G from Staphylococcus aureus (strain Mu3 / ATCC 700698).